A 338-amino-acid chain; its full sequence is Nuclear hormone receptor family member nhr-52 (338 aa).

Positions 1 to 75 (MKCLVCCSYA…IGMRFSEPKQ (75 aa)) form a DNA-binding region, nuclear receptor. 2 consecutive NR C4-type zinc fingers follow at residues 3-23 (CLVCCSYASSRNFGALSCSAC) and 39-63 (CKYDKKCFESFTILPKCQFCRFKKC). One can recognise an NR LBD domain in the interval 98–337 (KDGVHYSNFL…KKLVNDIIIR (240 aa)).

Belongs to the nuclear hormone receptor family.

The protein resides in the nucleus. In terms of biological role, orphan nuclear receptor. This chain is Nuclear hormone receptor family member nhr-52 (nhr-52), found in Caenorhabditis elegans.